Reading from the N-terminus, the 31-residue chain is Cyclotide vpub-B (31 aa).

Positions 1–31 (GIIPCGESCVFIPCITSVVGCSCKSKVCYKN) form a cross-link, cyclopeptide (Gly-Asn). 3 cysteine pairs are disulfide-bonded: cysteine 5–cysteine 21, cysteine 9–cysteine 23, and cysteine 14–cysteine 28.

This sequence belongs to the cyclotide family. Bracelet subfamily. Post-translationally, this is a cyclic peptide.

In terms of biological role, probably participates in a plant defense mechanism. The polypeptide is Cyclotide vpub-B (Viola pubescens (Downy yellow violet)).